A 1941-amino-acid polypeptide reads, in one-letter code: Myosin-7B (1941 aa).

Residues 30-80 (DGKKRVWVPDEQDAYVEAEVKTEATGGKVTVETKDQKVLTVRETEMQPMNP) form the Myosin N-terminal SH3-like domain. A Myosin motor domain is found at 84-785 (DLLEDMAMMT…LLGILEELRD (702 aa)). 177–184 (GESGAGKT) serves as a coordination point for ATP. Actin-binding stretches follow at residues 662 to 684 (LNKL…VPNE) and 764 to 778 (QFGH…GLLG). One can recognise an IQ domain in the interval 788 to 817 (LAKVLTLLQARSRGRLMRLEYQRMLGGRDA). Residues 846 to 1935 (LLRSAQAEEE…KLRARSRDAL (1090 aa)) adopt a coiled-coil conformation. The disordered stretch occupies residues 1887–1941 (RQFEEAEQQASTNLAKYRKAQHELDDAEERADMAETQANKLRARSRDALGPKHKE). Basic and acidic residues predominate over residues 1930 to 1941 (RSRDALGPKHKE).

The protein belongs to the TRAFAC class myosin-kinesin ATPase superfamily. Myosin family. In terms of assembly, muscle myosin is a hexameric protein that consists of 2 heavy chain subunits (MHC), 2 alkali light chain subunits (MLC) and 2 regulatory light chain subunits (MLC-2).

It is found in the membrane. Involved in muscle contraction. The sequence is that of Myosin-7B (Myh7b) from Mus musculus (Mouse).